Here is a 2141-residue protein sequence, read N- to C-terminus: Oxygen-regulated protein 1 (2141 aa).

Residues 1-10 (MSETSSTSVS) are compositionally biased toward polar residues. Positions 1–20 (MSETSSTSVSMIHRSFEGQG) are disordered. One can recognise a Doublecortin 1 domain in the interval 34–116 (KKISFYKSGD…RRKVQPVDLD (83 aa)). Residues 126–149 (LSSRAISAHAQRSPPTSIGAAGAP) are disordered. The 80-residue stretch at 156–235 (RRLLVFRNGD…REPFKPGNYD (80 aa)) folds into the Doublecortin 2 domain. Disordered regions lie at residues 259 to 278 (RSESRKMSTHVPSSPRSQIY), 1432 to 1458 (YTSSDKEDSKTSEEPGSITNSMTSSER), and 1589 to 1612 (DWSEFRPSSENEQPYKTSSDGPNG). Polar residues predominate over residues 268–278 (HVPSSPRSQIY). Positions 1435 to 1444 (SDKEDSKTSE) are enriched in basic and acidic residues. Polar residues-rich tracts occupy residues 1448-1458 (SITNSMTSSER) and 1598-1610 (ENEQPYKTSSDGP).

Interacts (via the doublecortin domains) with microtubules. Interacts with RP1L1. Interacts with MAK.

The protein localises to the cytoplasm. Its subcellular location is the cytoskeleton. It is found in the cilium axoneme. It localises to the cell projection. The protein resides in the cilium. The protein localises to the photoreceptor outer segment. In terms of biological role, microtubule-associated protein regulating the stability and length of the microtubule-based axoneme of photoreceptors. Required for the differentiation of photoreceptor cells, it plays a role in the organization of the outer segment of rod and cone photoreceptors ensuring the correct orientation and higher-order stacking of outer segment disks along the photoreceptor axoneme. The chain is Oxygen-regulated protein 1 (RP1) from Canis lupus familiaris (Dog).